Reading from the N-terminus, the 191-residue chain is Probable GTP-binding protein EngB (191 aa).

The EngB-type G domain occupies 22 to 190 (RLPEIAFLGR…WQAITTTLQA (169 aa)). GTP contacts are provided by residues 30 to 37 (GRSNVGKS), 57 to 61 (GRTQT), 75 to 78 (DLPG), 142 to 145 (TKTD), and 169 to 171 (FSA). The Mg(2+) site is built by S37 and T59.

The protein belongs to the TRAFAC class TrmE-Era-EngA-EngB-Septin-like GTPase superfamily. EngB GTPase family. Mg(2+) is required as a cofactor.

Functionally, necessary for normal cell division and for the maintenance of normal septation. This Solibacter usitatus (strain Ellin6076) protein is Probable GTP-binding protein EngB.